Here is a 339-residue protein sequence, read N- to C-terminus: NmrA-like family domain-containing oxidoreductase cpsB (339 aa).

Residue K142 coordinates NADP(+).

The protein belongs to the NmrA-type oxidoreductase family.

It catalyses the reaction didehydrocampesine A + 2 AH2 = campesine A + 2 A. The protein operates within alkaloid biosynthesis. In terms of biological role, oxidoreductase; part of the gene cluster that mediates the biosynthesis of campesine G, a dimeric indole piperazine alkaloid that shows good insecticidal activity Galleria mellonella. Within the pathway, cpsB reduces the unstable (S,S)-trypyl-valyl dihydropiperazine (didehydrocampesine A) intermediate to (S, S)-trypyl-valyl-piperazine (campesine A) using two equivalents of NAD(P)H. The non-canonical non-ribosomal peptide synthetase cpsA catalyzes the first steps of the pathway by producing L-tryptophanal and L-valinal from their respective amino-acids. These products condensate spontaneously to form trypyl-valyl pyrazine also known as didehydrocampesine A. The NmrA-like family domain-containing oxidoreductase cpsB is the next enzyme in cps pathway and reduces the unstable didehydrocampesine A to campesine A. The methyltransferase cpsF and the acetyltransferase cpsE both recognize N13 of piperazine ring to carry out methylation and acetylation of campesine A to produce campesine C and B, respectively. The cytochrome P450 monooxygenase cpsD then acts as a dimerase that catalyzes oxidative heterocoupling between campesine B and C to produce heterodimers with unexpected 6/5/6/6/6/6/5/6 eight-ring scaffold called campesine D. Finally,the cytochrome P450 monooxygenase cpsC is a regioselective dehydrogenase that catalyzes dehydrogenation reaction towards C2-N1 to produce campesine G. The sequence is that of NmrA-like family domain-containing oxidoreductase cpsB from Aspergillus campestris (strain IBT 28561).